Consider the following 105-residue polypeptide: Met repressor (105 aa).

It belongs to the MetJ family. As to quaternary structure, homodimer.

It localises to the cytoplasm. Functionally, this regulatory protein, when combined with SAM (S-adenosylmethionine) represses the expression of the methionine regulon and of enzymes involved in SAM synthesis. The polypeptide is Met repressor (Erwinia tasmaniensis (strain DSM 17950 / CFBP 7177 / CIP 109463 / NCPPB 4357 / Et1/99)).